A 239-amino-acid polypeptide reads, in one-letter code: Ribosomal RNA small subunit methyltransferase G (239 aa).

S-adenosyl-L-methionine is bound by residues glycine 79, phenylalanine 84, 130–131 (AE), and arginine 149.

The protein belongs to the methyltransferase superfamily. RNA methyltransferase RsmG family.

It localises to the cytoplasm. Functionally, specifically methylates the N7 position of a guanine in 16S rRNA. The protein is Ribosomal RNA small subunit methyltransferase G of Lactobacillus johnsonii (strain CNCM I-12250 / La1 / NCC 533).